The following is a 607-amino-acid chain: Elongation factor 4 (607 aa).

The region spanning 11–193 (ENIRNFSIIA…KIVEVVPAPD (183 aa)) is the tr-type G domain. GTP is bound by residues 23 to 28 (DHGKST) and 140 to 143 (NKID).

Belongs to the TRAFAC class translation factor GTPase superfamily. Classic translation factor GTPase family. LepA subfamily.

The protein localises to the cell membrane. The catalysed reaction is GTP + H2O = GDP + phosphate + H(+). Required for accurate and efficient protein synthesis under certain stress conditions. May act as a fidelity factor of the translation reaction, by catalyzing a one-codon backward translocation of tRNAs on improperly translocated ribosomes. Back-translocation proceeds from a post-translocation (POST) complex to a pre-translocation (PRE) complex, thus giving elongation factor G a second chance to translocate the tRNAs correctly. Binds to ribosomes in a GTP-dependent manner. In Staphylococcus aureus (strain USA300), this protein is Elongation factor 4.